A 468-amino-acid chain; its full sequence is Chromosomal replication initiator protein DnaA (468 aa).

The tract at residues Met1–Ala84 is domain I, interacts with DnaA modulators. The segment at Arg81–Pro104 is disordered. A domain II region spans residues Ala84 to Ser131. Residues Asn132–Ala348 form a domain III, AAA+ region region. 4 residues coordinate ATP: Gly176, Gly178, Lys179, and Thr180. The segment at Asn349–Ser468 is domain IV, binds dsDNA.

It belongs to the DnaA family. As to quaternary structure, oligomerizes as a right-handed, spiral filament on DNA at oriC.

The protein localises to the cytoplasm. Its function is as follows. Plays an essential role in the initiation and regulation of chromosomal replication. ATP-DnaA binds to the origin of replication (oriC) to initiate formation of the DNA replication initiation complex once per cell cycle. Binds the DnaA box (a 9 base pair repeat at the origin) and separates the double-stranded (ds)DNA. Forms a right-handed helical filament on oriC DNA; dsDNA binds to the exterior of the filament while single-stranded (ss)DNA is stabiized in the filament's interior. The ATP-DnaA-oriC complex binds and stabilizes one strand of the AT-rich DNA unwinding element (DUE), permitting loading of DNA polymerase. After initiation quickly degrades to an ADP-DnaA complex that is not apt for DNA replication. Binds acidic phospholipids. The protein is Chromosomal replication initiator protein DnaA of Vibrio campbellii (strain ATCC BAA-1116).